The chain runs to 341 residues: Tetraacyldisaccharide 4'-kinase (341 aa).

An ATP-binding site is contributed by 65-72 (TVGGSGKT).

Belongs to the LpxK family.

The enzyme catalyses a lipid A disaccharide + ATP = a lipid IVA + ADP + H(+). It functions in the pathway glycolipid biosynthesis; lipid IV(A) biosynthesis; lipid IV(A) from (3R)-3-hydroxytetradecanoyl-[acyl-carrier-protein] and UDP-N-acetyl-alpha-D-glucosamine: step 6/6. Transfers the gamma-phosphate of ATP to the 4'-position of a tetraacyldisaccharide 1-phosphate intermediate (termed DS-1-P) to form tetraacyldisaccharide 1,4'-bis-phosphate (lipid IVA). The sequence is that of Tetraacyldisaccharide 4'-kinase from Shewanella woodyi (strain ATCC 51908 / MS32).